The following is a 357-amino-acid chain: Protein RecA (357 aa).

67-74 (GPESSGKT) provides a ligand contact to ATP. A disordered region spans residues 332-357 (PSAMSSSSSDDENSEGNVDFETGEVF).

It belongs to the RecA family.

The protein localises to the cytoplasm. Can catalyze the hydrolysis of ATP in the presence of single-stranded DNA, the ATP-dependent uptake of single-stranded DNA by duplex DNA, and the ATP-dependent hybridization of homologous single-stranded DNAs. It interacts with LexA causing its activation and leading to its autocatalytic cleavage. The chain is Protein RecA from Shewanella sp. (strain ANA-3).